Consider the following 220-residue polypeptide: Mediator of RNA polymerase II transcription subunit 7 (220 aa).

It belongs to the Mediator complex subunit 7 family. Component of the Mediator complex. Interacts with MED21.

It localises to the nucleus. Its function is as follows. Component of the Mediator complex, a coactivator involved in the regulated transcription of nearly all RNA polymerase II-dependent genes. Mediator functions as a bridge to convey information from gene-specific regulatory proteins to the basal RNA polymerase II transcription machinery. Mediator is recruited to promoters by direct interactions with regulatory proteins and serves as a scaffold for the assembly of a functional preinitiation complex with RNA polymerase II and the general transcription factors. Required for activated transcription of the MtnA, MtnB and MtnD genes. This Drosophila melanogaster (Fruit fly) protein is Mediator of RNA polymerase II transcription subunit 7 (MED7).